A 542-amino-acid chain; its full sequence is CTP synthase (542 aa).

Residues 1-265 (MTRYIFITGG…DDEVLSVFGI (265 aa)) form an amidoligase domain region. Ser13 contributes to the CTP binding site. Ser13 provides a ligand contact to UTP. ATP-binding positions include 14 to 19 (SLGKGL) and Asp71. Positions 71 and 139 each coordinate Mg(2+). Residues 146-148 (DIE), 186-191 (KTKPTQ), and Lys222 contribute to the CTP site. UTP contacts are provided by residues 186–191 (KTKPTQ) and Lys222. The 251-residue stretch at 291-541 (TIAIVGKYTG…VEAAVEQSRL (251 aa)) folds into the Glutamine amidotransferase type-1 domain. Position 353 (Gly353) interacts with L-glutamine. Cys380 serves as the catalytic Nucleophile; for glutamine hydrolysis. L-glutamine contacts are provided by residues 381 to 384 (FGMQ), Glu404, and Arg469. Residues His514 and Glu516 contribute to the active site.

It belongs to the CTP synthase family. In terms of assembly, homotetramer.

The enzyme catalyses UTP + L-glutamine + ATP + H2O = CTP + L-glutamate + ADP + phosphate + 2 H(+). The catalysed reaction is L-glutamine + H2O = L-glutamate + NH4(+). It carries out the reaction UTP + NH4(+) + ATP = CTP + ADP + phosphate + 2 H(+). It participates in pyrimidine metabolism; CTP biosynthesis via de novo pathway; CTP from UDP: step 2/2. Its activity is regulated as follows. Allosterically activated by GTP, when glutamine is the substrate; GTP has no effect on the reaction when ammonia is the substrate. The allosteric effector GTP functions by stabilizing the protein conformation that binds the tetrahedral intermediate(s) formed during glutamine hydrolysis. Inhibited by the product CTP, via allosteric rather than competitive inhibition. Functionally, catalyzes the ATP-dependent amination of UTP to CTP with either L-glutamine or ammonia as the source of nitrogen. Regulates intracellular CTP levels through interactions with the four ribonucleotide triphosphates. The polypeptide is CTP synthase (Parvibaculum lavamentivorans (strain DS-1 / DSM 13023 / NCIMB 13966)).